We begin with the raw amino-acid sequence, 183 residues long: MEYLNLYKHLKKFIDSENEIIIDISENYPGLRFDINNKSGINLMIALADLSYVINHANQLKYANLLSQFRYNLFLDLKFLNNELKCNEFIDNIINQIPNNIQDYLLEFKNKNYSTDELSYIDNCDLKLKLMKKSFDEIASLSTHSQSVIELYCRIIYNDPSSFDFSVNGITLPNLKKFSNDFL.

This is an uncharacterized protein from Acanthamoeba polyphaga mimivirus (APMV).